The chain runs to 344 residues: Phosphoribosylformylglycinamidine cyclo-ligase (344 aa).

The protein belongs to the AIR synthase family.

The protein resides in the cytoplasm. The catalysed reaction is 2-formamido-N(1)-(5-O-phospho-beta-D-ribosyl)acetamidine + ATP = 5-amino-1-(5-phospho-beta-D-ribosyl)imidazole + ADP + phosphate + H(+). It functions in the pathway purine metabolism; IMP biosynthesis via de novo pathway; 5-amino-1-(5-phospho-D-ribosyl)imidazole from N(2)-formyl-N(1)-(5-phospho-D-ribosyl)glycinamide: step 2/2. The protein is Phosphoribosylformylglycinamidine cyclo-ligase of Neisseria meningitidis serogroup C (strain 053442).